Reading from the N-terminus, the 263-residue chain is Receptor-transporting protein 1 (263 aa).

The Cytoplasmic portion of the chain corresponds to 1–238 (MRIFRPWRLR…ETGSGCNFCS (238 aa)). The segment at 88–197 (ASGRFHCSWC…GEFCEACQEG (110 aa)) adopts a 3CxxC-type zinc-finger fold. The chain crosses the membrane as a helical span at residues 239–259 (IPWCLFWATVLMLIIYLQFSF). The Extracellular segment spans residues 260 to 263 (RTSV).

It belongs to the TMEM7 family. In terms of assembly, interacts with olfactory receptors. In terms of tissue distribution, predominantly expressed in olfactory and vomeronasal organs, in mature olfactory sensory neurons.

It is found in the cell membrane. In terms of biological role, specifically promotes functional cell surface expression of olfactory receptors, but not of other GPCRs. In Mus musculus (Mouse), this protein is Receptor-transporting protein 1 (Rtp1).